The primary structure comprises 94 residues: Co-chaperonin GroES (94 aa).

This sequence belongs to the GroES chaperonin family. In terms of assembly, heptamer of 7 subunits arranged in a ring. Interacts with the chaperonin GroEL.

The protein resides in the cytoplasm. In terms of biological role, together with the chaperonin GroEL, plays an essential role in assisting protein folding. The GroEL-GroES system forms a nano-cage that allows encapsulation of the non-native substrate proteins and provides a physical environment optimized to promote and accelerate protein folding. GroES binds to the apical surface of the GroEL ring, thereby capping the opening of the GroEL channel. In Streptococcus agalactiae serotype III (strain NEM316), this protein is Co-chaperonin GroES.